The primary structure comprises 606 residues: Glutamine--fructose-6-phosphate aminotransferase [isomerizing] (606 aa).

Cysteine 2 (nucleophile; for GATase activity) is an active-site residue. A Glutamine amidotransferase type-2 domain is found at 2 to 218 (CGIFGYLGQR…SGELAVLRIG (217 aa)). 2 SIS domains span residues 278–424 (FAES…QRQE) and 455–596 (WRCR…VDRP). Lysine 601 (for Fru-6P isomerization activity) is an active-site residue.

As to quaternary structure, homodimer.

It localises to the cytoplasm. The enzyme catalyses D-fructose 6-phosphate + L-glutamine = D-glucosamine 6-phosphate + L-glutamate. Catalyzes the first step in hexosamine metabolism, converting fructose-6P into glucosamine-6P using glutamine as a nitrogen source. This is Glutamine--fructose-6-phosphate aminotransferase [isomerizing] from Chlamydia muridarum (strain MoPn / Nigg).